Here is a 1132-residue protein sequence, read N- to C-terminus: Tyrosine-protein kinase JAK2 (1132 aa).

Residues 1–239 (MGMACLTMTE…RYRFRRFIQQ (239 aa)) are interaction with cytokine/interferon/growth hormone receptors. The region spanning 37–380 (PVLQVYLYHS…GYYRLTADAH (344 aa)) is the FERM domain. Tyr119 carries the post-translational modification Phosphotyrosine; by autocatalysis. Phosphotyrosine occurs at positions 372 and 373. The SH2; atypical domain occupies 401–482 (HGPISMDFAI…SLKDLLNCYQ (82 aa)). Residue Ser523 is modified to Phosphoserine. The 265-residue stretch at 545–809 (LIFNESLGQG…AIIRDLNSLF (265 aa)) folds into the Protein kinase 1 domain. Tyr570 and Tyr813 each carry phosphotyrosine. Positions 849–1124 (LKFLQQLGKG…SFRDLALRVD (276 aa)) constitute a Protein kinase 2 domain. 855 to 863 (LGKGNFGSV) serves as a coordination point for ATP. Residue Tyr868 is modified to Phosphotyrosine; by autocatalysis. Residue Lys882 coordinates ATP. Phosphotyrosine; by autocatalysis occurs at positions 966 and 972. Asp976 acts as the Proton acceptor in catalysis. Phosphotyrosine; by autocatalysis is present on residues Tyr1007 and Tyr1008.

Belongs to the protein kinase superfamily. Tyr protein kinase family. JAK subfamily. As to quaternary structure, interacts with EPOR, LYN, SIRPA, SH2B1 and TEC. Interacts with IL23R. Interacts with SKB1. Interacts with STAM2. Interacts with IFNGR2 (via intracellular domain). Interacts with LEPR (Isoform B). Interacts with HSP90AB1; promotes functional activation in a heat shock-dependent manner. Interacts with STRA6. Interacts with RHEX; this interaction occurs in a erythropoietin (EPO)-dependent manner. Interacts with ASB2; the interaction targets JAK2 for Notch-induced proteasomal degradation. Interacts with MPL/TPOR. It depends on Mg(2+) as a cofactor. In terms of processing, autophosphorylated, leading to regulate its activity. Leptin promotes phosphorylation on tyrosine residues, including phosphorylation on Tyr-813. Autophosphorylation on Tyr-119 in response to EPO down-regulates its kinase activity. Autophosphorylation on Tyr-868, Tyr-966 and Tyr-972 in response to growth hormone (GH) are required for maximal kinase activity. Also phosphorylated by TEC. Phosphorylated on tyrosine residues in response to interferon gamma signaling. Phosphorylated on tyrosine residues in response to a signaling cascade that is activated by increased cellular retinol. Undergoes Notch-induced ubiquitination and subsequent proteasomal degradation which is mediated by ASB1 or ASB2, the substrate-recognition components of probable ECS E3 ubiquitin-protein ligase complexes. Ubiquitously expressed throughout most tissues.

The protein resides in the endomembrane system. Its subcellular location is the cytoplasm. The protein localises to the nucleus. The enzyme catalyses L-tyrosyl-[protein] + ATP = O-phospho-L-tyrosyl-[protein] + ADP + H(+). With respect to regulation, regulated by autophosphorylation, can both activate or decrease activity. Heme regulates its activity by enhancing the phosphorylation on Tyr-1007 and Tyr-1008. In terms of biological role, non-receptor tyrosine kinase involved in various processes such as cell growth, development, differentiation or histone modifications. Mediates essential signaling events in both innate and adaptive immunity. In the cytoplasm, plays a pivotal role in signal transduction via its association with type I receptors such as growth hormone (GHR), prolactin (PRLR), leptin (LEPR), erythropoietin (EPOR), thrombopoietin receptor (MPL/TPOR); or type II receptors including IFN-alpha, IFN-beta, IFN-gamma and multiple interleukins. Following ligand-binding to cell surface receptors, phosphorylates specific tyrosine residues on the cytoplasmic tails of the receptor, creating docking sites for STATs proteins. Subsequently, phosphorylates the STATs proteins once they are recruited to the receptor. Phosphorylated STATs then form homodimer or heterodimers and translocate to the nucleus to activate gene transcription. For example, cell stimulation with erythropoietin (EPO) during erythropoiesis leads to JAK2 autophosphorylation, activation, and its association with erythropoietin receptor (EPOR) that becomes phosphorylated in its cytoplasmic domain. Then, STAT5 (STAT5A or STAT5B) is recruited, phosphorylated and activated by JAK2. Once activated, dimerized STAT5 translocates into the nucleus and promotes the transcription of several essential genes involved in the modulation of erythropoiesis. Part of a signaling cascade that is activated by increased cellular retinol and that leads to the activation of STAT5 (STAT5A or STAT5B). In addition, JAK2 mediates angiotensin-2-induced ARHGEF1 phosphorylation. Plays a role in cell cycle by phosphorylating CDKN1B. Cooperates with TEC through reciprocal phosphorylation to mediate cytokine-driven activation of FOS transcription. In the nucleus, plays a key role in chromatin by specifically mediating phosphorylation of 'Tyr-41' of histone H3 (H3Y41ph), a specific tag that promotes exclusion of CBX5 (HP1 alpha) from chromatin. Up-regulates the potassium voltage-gated channel activity of KCNA3. The polypeptide is Tyrosine-protein kinase JAK2 (Homo sapiens (Human)).